The following is a 201-amino-acid chain: Imidazole glycerol phosphate synthase subunit HisH (201 aa).

Positions 1-201 (MVFIADYGAG…LQVLRNFAEC (201 aa)) constitute a Glutamine amidotransferase type-1 domain. Cys-79 serves as the catalytic Nucleophile. Catalysis depends on residues His-183 and Glu-185.

As to quaternary structure, heterodimer of HisH and HisF.

It is found in the cytoplasm. It carries out the reaction 5-[(5-phospho-1-deoxy-D-ribulos-1-ylimino)methylamino]-1-(5-phospho-beta-D-ribosyl)imidazole-4-carboxamide + L-glutamine = D-erythro-1-(imidazol-4-yl)glycerol 3-phosphate + 5-amino-1-(5-phospho-beta-D-ribosyl)imidazole-4-carboxamide + L-glutamate + H(+). The enzyme catalyses L-glutamine + H2O = L-glutamate + NH4(+). It participates in amino-acid biosynthesis; L-histidine biosynthesis; L-histidine from 5-phospho-alpha-D-ribose 1-diphosphate: step 5/9. Functionally, IGPS catalyzes the conversion of PRFAR and glutamine to IGP, AICAR and glutamate. The HisH subunit catalyzes the hydrolysis of glutamine to glutamate and ammonia as part of the synthesis of IGP and AICAR. The resulting ammonia molecule is channeled to the active site of HisF. This chain is Imidazole glycerol phosphate synthase subunit HisH, found in Chlorobium luteolum (strain DSM 273 / BCRC 81028 / 2530) (Pelodictyon luteolum).